Consider the following 353-residue polypeptide: 3-dehydroquinate synthase (353 aa).

Belongs to the archaeal-type DHQ synthase family.

It catalyses the reaction 2-amino-2,3,7-trideoxy-D-lyxo-hept-6-ulosonate + NAD(+) + H2O = 3-dehydroquinate + NH4(+) + NADH + H(+). Catalyzes the oxidative deamination and cyclization of 2-amino-3,7-dideoxy-D-threo-hept-6-ulosonic acid (ADH) to yield 3-dehydroquinate (DHQ), which is fed into the canonical shikimic pathway of aromatic amino acid biosynthesis. This is 3-dehydroquinate synthase from Nitrosopumilus maritimus (strain SCM1).